A 318-amino-acid polypeptide reads, in one-letter code: uncharacterized protein (318 aa).

This sequence to E.coli YfaT and P.aeruginosa PA4490.

This is an uncharacterized protein from Thermotoga maritima (strain ATCC 43589 / DSM 3109 / JCM 10099 / NBRC 100826 / MSB8).